The sequence spans 154 residues: ATP synthase subunit b', chloroplastic (154 aa).

Residues 22-42 (GTLPLIAIQFLILMFLLNILL) form a helical membrane-spanning segment.

It belongs to the ATPase B chain family. F-type ATPases have 2 components, F(1) - the catalytic core - and F(0) - the membrane proton channel. F(1) has five subunits: alpha(3), beta(3), gamma(1), delta(1), epsilon(1). F(0) has four main subunits: a(1), b(1), b'(1) and c(10-14). The alpha and beta chains form an alternating ring which encloses part of the gamma chain. F(1) is attached to F(0) by a central stalk formed by the gamma and epsilon chains, while a peripheral stalk is formed by the delta, b and b' chains.

The protein resides in the plastid. The protein localises to the chloroplast thylakoid membrane. In terms of biological role, f(1)F(0) ATP synthase produces ATP from ADP in the presence of a proton or sodium gradient. F-type ATPases consist of two structural domains, F(1) containing the extramembraneous catalytic core and F(0) containing the membrane proton channel, linked together by a central stalk and a peripheral stalk. During catalysis, ATP synthesis in the catalytic domain of F(1) is coupled via a rotary mechanism of the central stalk subunits to proton translocation. Functionally, component of the F(0) channel, it forms part of the peripheral stalk, linking F(1) to F(0). The b'-subunit is a diverged and duplicated form of b found in plants and photosynthetic bacteria. The chain is ATP synthase subunit b', chloroplastic from Vaucheria litorea (Yellow-green alga).